We begin with the raw amino-acid sequence, 194 residues long: ATP-dependent Clp protease proteolytic subunit (194 aa).

The active-site Nucleophile is the serine 97. Histidine 122 is a catalytic residue.

Belongs to the peptidase S14 family. As to quaternary structure, fourteen ClpP subunits assemble into 2 heptameric rings which stack back to back to give a disk-like structure with a central cavity, resembling the structure of eukaryotic proteasomes.

The protein localises to the cytoplasm. The enzyme catalyses Hydrolysis of proteins to small peptides in the presence of ATP and magnesium. alpha-casein is the usual test substrate. In the absence of ATP, only oligopeptides shorter than five residues are hydrolyzed (such as succinyl-Leu-Tyr-|-NHMec, and Leu-Tyr-Leu-|-Tyr-Trp, in which cleavage of the -Tyr-|-Leu- and -Tyr-|-Trp bonds also occurs).. In terms of biological role, cleaves peptides in various proteins in a process that requires ATP hydrolysis. Has a chymotrypsin-like activity. Plays a major role in the degradation of misfolded proteins. In Carsonella ruddii (strain PV), this protein is ATP-dependent Clp protease proteolytic subunit.